The following is a 444-amino-acid chain: MSSEIVPIAEPIRPADGGLGAAHASVAVPKGGHWWFRLLAFLGPGYMVSVGYMDPGNWATDLAGGSQFGYLLLSVILLSNLMAIVLQGLSARLGIATGLDLAQACRARYPRGINLALWGLCELAIIACDLAEVIGTAIALKLLFGIPLTLGAIITALDVVLVLLLMNRGFRALEAFVMALLLVIFVCFGIQIALAAPPIAAVLAGFIPRAEVVTNPHALYLAIGIIGATVMPHNLYLHSSIVQTRAYPRTDAGRRSALRWAVTDSTVALMFALFINAAILILAAAVFHAQGRTDVQEIEQAHALLAPMLGVGLASTLFAVALLASGVNSTVTATLAGQIVMEGFLRLRLPPWMRRLLTRGIAIVPVVVVTWLYGEAGTARLLVLSQVVLSMQLPFAVIPLVRFVADRGLMGALVAPAWLVRLAWVIALVIVGLNLKLLWEFALG.

The next 11 membrane-spanning stretches (helical) occupy residues 31-51 (GGHW…VSVG), 68-88 (FGYL…VLQG), 115-135 (LALW…EVIG), 146-166 (IPLT…LLLM), 175-195 (AFVM…IALA), 212-232 (VVTN…TVMP), 267-287 (VALM…AAVF), 303-323 (ALLA…VALL), 356-376 (LLTR…YGEA), 381-401 (LLVL…IPLV), and 413-433 (LVAP…IVGL).

The protein belongs to the NRAMP family.

It localises to the cell inner membrane. H(+)-stimulated, divalent metal cation uptake system. This Xanthomonas campestris pv. campestris (strain ATCC 33913 / DSM 3586 / NCPPB 528 / LMG 568 / P 25) protein is Divalent metal cation transporter MntH.